Reading from the N-terminus, the 123-residue chain is Protein Wnt-3b (123 aa).

A lipid anchor (O-palmitoleoyl serine; by PORCN) is attached at Ser-1. Cys-89 and Cys-104 are disulfide-bonded. Asn-90 is a glycosylation site (N-linked (GlcNAc...) asparagine).

Belongs to the Wnt family. Post-translationally, palmitoleoylation is required for efficient binding to frizzled receptors. Depalmitoleoylation leads to Wnt signaling pathway inhibition.

Its subcellular location is the secreted. The protein localises to the extracellular space. It is found in the extracellular matrix. Its function is as follows. Ligand for members of the frizzled family of seven transmembrane receptors. Probable developmental protein. May be a signaling molecule which affects the development of discrete regions of tissues. Is likely to signal over only few cell diameters. In Plethodon jordani (Red-cheeked salamander), this protein is Protein Wnt-3b (WNT-3B).